The sequence spans 694 residues: Elongation factor G (694 aa).

Residues 10-285 (EKTRNIGIMA…GVVDYLPSPL (276 aa)) form the tr-type G domain. Residues 19-26 (AHIDAGKT), 83-87 (DTPGH), and 137-140 (NKMD) each bind GTP.

This sequence belongs to the TRAFAC class translation factor GTPase superfamily. Classic translation factor GTPase family. EF-G/EF-2 subfamily.

The protein resides in the cytoplasm. Functionally, catalyzes the GTP-dependent ribosomal translocation step during translation elongation. During this step, the ribosome changes from the pre-translocational (PRE) to the post-translocational (POST) state as the newly formed A-site-bound peptidyl-tRNA and P-site-bound deacylated tRNA move to the P and E sites, respectively. Catalyzes the coordinated movement of the two tRNA molecules, the mRNA and conformational changes in the ribosome. The chain is Elongation factor G from Lactobacillus delbrueckii subsp. bulgaricus (strain ATCC 11842 / DSM 20081 / BCRC 10696 / JCM 1002 / NBRC 13953 / NCIMB 11778 / NCTC 12712 / WDCM 00102 / Lb 14).